Reading from the N-terminus, the 751-residue chain is 1,3-beta-galactosyl-N-acetylhexosamine phosphorylase (751 aa).

Residue Asp-313 is the Proton donor of the active site.

This sequence belongs to the glycoside hydrolase 112 family. In terms of assembly, homodimer.

The catalysed reaction is beta-D-galactosyl-(1-&gt;3)-N-acetyl-D-glucosamine + phosphate = alpha-D-galactose 1-phosphate + N-acetyl-D-glucosamine. In terms of biological role, reversibly phosphorolyzes lacto-N-biose to Gal1-P and N-acetylglucosamine (GlcNAc) and galacto-N-biose to Gal1-P and N-acetylgalactosamine (GalNAc). Involved in the lacto-N-biose I/galacto-N-biose (LNB/GNB) degradation pathway, which is important for host intestinal colonization by bifidobacteria. The chain is 1,3-beta-galactosyl-N-acetylhexosamine phosphorylase (lnpA) from Bifidobacterium longum subsp. longum (strain ATCC 15707 / DSM 20219 / JCM 1217 / NCTC 11818 / E194b).